Reading from the N-terminus, the 390-residue chain is uncharacterized protein (390 aa).

Residues 215–325 (SRFKRKTLGK…KLIKDCEMVE (111 aa)) enclose the Glutaredoxin domain.

This is an uncharacterized protein from Arabidopsis thaliana (Mouse-ear cress).